Here is a 100-residue protein sequence, read N- to C-terminus: Urease subunit gamma (100 aa).

It belongs to the urease gamma subunit family. In terms of assembly, heterotrimer of UreA (gamma), UreB (beta) and UreC (alpha) subunits. Three heterotrimers associate to form the active enzyme.

It is found in the cytoplasm. The enzyme catalyses urea + 2 H2O + H(+) = hydrogencarbonate + 2 NH4(+). It participates in nitrogen metabolism; urea degradation; CO(2) and NH(3) from urea (urease route): step 1/1. This chain is Urease subunit gamma, found in Burkholderia orbicola (strain MC0-3).